A 450-amino-acid polypeptide reads, in one-letter code: Guanine deaminase (450 aa).

Residues H88 and H90 each coordinate Zn(2+). Substrate-binding positions include 90–93 (HAPQ), 218–219 (RF), 245–248 (HLSE), and D335. 2 residues coordinate Zn(2+): H245 and D335.

It belongs to the metallo-dependent hydrolases superfamily. ATZ/TRZ family. Zn(2+) is required as a cofactor.

It catalyses the reaction guanine + H2O + H(+) = xanthine + NH4(+). Its pathway is purine metabolism; guanine degradation; xanthine from guanine: step 1/1. Functionally, catalyzes the hydrolytic deamination of guanine, producing xanthine and ammonia. This chain is Guanine deaminase (guaD), found in Dictyostelium discoideum (Social amoeba).